A 623-amino-acid polypeptide reads, in one-letter code: Transketolase (623 aa).

Met-1 is modified (N-acetylmethionine). Ser-3 bears the Phosphoserine mark. N6-acetyllysine occurs at positions 6 and 11. His-37 serves as a coordination point for substrate. Residues Ser-40 and His-77 each coordinate thiamine diphosphate. Ser-104 is modified (phosphoserine). Position 123–125 (123–125 (GSL)) interacts with thiamine diphosphate. Position 144 is an N6-acetyllysine (Lys-144). Residue Asp-155 participates in Mg(2+) binding. The thiamine diphosphate site is built by Gly-156 and Asn-185. Asn-185 and Leu-187 together coordinate Mg(2+). Lys-204, Lys-232, and Lys-241 each carry N6-acetyllysine. Residues Lys-244 and His-258 each contribute to the thiamine diphosphate site. His-258 contacts substrate. The residue at position 260 (Lys-260) is an N6-acetyllysine. At Tyr-275 the chain carries Phosphotyrosine. Thr-287 carries the phosphothreonine modification. At Ser-295 the chain carries Phosphoserine. 2 residues coordinate substrate: Arg-318 and Ser-345. Ser-345 bears the Phosphoserine mark. Lys-352 is covalently cross-linked (Glycyl lysine isopeptide (Lys-Gly) (interchain with G-Cter in SUMO2)). The Proton donor role is filled by Glu-366. Phe-392 contributes to the thiamine diphosphate binding site. Substrate-binding residues include His-416 and Asp-424. Gln-428 is a binding site for thiamine diphosphate. Arg-474 contributes to the substrate binding site. Lys-538 and Lys-603 each carry N6-acetyllysine.

The protein belongs to the transketolase family. As to quaternary structure, homodimer. Mg(2+) serves as cofactor. It depends on Ca(2+) as a cofactor. Mn(2+) is required as a cofactor. Requires Co(2+) as cofactor. The cofactor is thiamine diphosphate.

The enzyme catalyses D-sedoheptulose 7-phosphate + D-glyceraldehyde 3-phosphate = aldehydo-D-ribose 5-phosphate + D-xylulose 5-phosphate. In terms of biological role, catalyzes the transfer of a two-carbon ketol group from a ketose donor to an aldose acceptor, via a covalent intermediate with the cofactor thiamine pyrophosphate. The polypeptide is Transketolase (TKT) (Homo sapiens (Human)).